A 397-amino-acid polypeptide reads, in one-letter code: Lymphoid enhancer-binding factor 1 (397 aa).

A CTNNB1-binding region spans residues 1-60 (MPQLSGGGGGGDPELCATDEMIPFKDEGDPQKEKIFAEISHPEEEGDLADIKSSLVNESE). Residue Lys25 forms a Glycyl lysine isopeptide (Lys-Gly) (interchain with G-Cter in SUMO) linkage. Residues 38–102 (EISHPEEEGD…KHPDGGLYNK (65 aa)) are disordered. Positions 80 to 96 (PYHDKAREHPDDGKHPD) are enriched in basic and acidic residues. Ser130 is modified (phosphoserine). Thr153 carries the post-translational modification Phosphothreonine; by NLK. The residue at position 164 (Ser164) is a Phosphoserine; by NLK. Disordered stretches follow at residues 164–190 (SPGSHPSHIPSEVNPKQGMSRHPPAPE) and 266–296 (VKQEHPHTDSDLMHVKPEHEQRKEQEPKRPH). A Glycyl lysine isopeptide (Lys-Gly) (interchain with G-Cter in SUMO) cross-link involves residue Lys267. The span at 267 to 294 (KQEHPHTDSDLMHVKPEHEQRKEQEPKR) shows a compositional bias: basic and acidic residues. Residues 297 to 365 (IKKPLNAFML…LHMQLYPGWS (69 aa)) constitute a DNA-binding region (HMG box). Residues 367-397 (RDNYGKKKKRKREKLQESTSGTGPRMTAAYI) are disordered.

It belongs to the TCF/LEF family. As to quaternary structure, binds the armadillo repeat of CTNNB1 and forms a stable complex. Interacts with TLE1, PIASG, ALYREF/THOC4, EP300, MDFI and MDFIC. Interacts with DAZAP2. Post-translationally, phosphorylated at Thr-153 and/or Ser-164 by NLK. Phosphorylation by NLK at these sites represses LEF1-mediated transcriptional activation of target genes of the canonical Wnt signaling pathway.

It is found in the nucleus. Transcription factor that binds DNA in a sequence-specific manner. Participates in the Wnt signaling pathway. Activates transcription of target genes in the presence of CTNNB1 and EP300. PIASG antagonizes both Wnt-dependent and Wnt-independent activation by LEF1. TLE1, TLE2, TLE3 and TLE4 repress transactivation mediated by LEF1 and CTNNB1. Regulates T-cell receptor alpha enhancer function. Required for IL17A expressing gamma-delta T-cell maturation and development, via binding to regulator loci of BLK to modulate expression. Acts as a positive regulator of odontoblast differentiation during mesenchymal tooth germ formation, expression is repressed during the bell stage by MSX1-mediated inhibition of CTNNB1 signaling. May play a role in hair cell differentiation and follicle morphogenesis. In Rattus norvegicus (Rat), this protein is Lymphoid enhancer-binding factor 1.